A 280-amino-acid polypeptide reads, in one-letter code: Transcription factor MYB60 (280 aa).

2 consecutive HTH myb-type domains span residues 9 to 65 and 66 to 116; these read KIGI…RPGI and KRGN…KKKL. 2 consecutive DNA-binding regions (H-T-H motif) follow at residues 37 to 61 and 89 to 112; these read WRSV…TNYL and WASI…NTHL. Residues C49 and C53 each carry the S-nitrosocysteine modification. Residues 118-127 are compositionally biased toward basic and acidic residues; sequence KSDSDERSRS. Disordered regions lie at residues 118-149 and 204-247; these read KSDS…TYAS and EEGH…NATP. The segment covering 128-149 has biased composition (polar residues); that stretch reads ENIALQTSSTRNTINHRSTYAS.

As to expression, specifically expressed in guard cells. Present in seedlings, leaves, stems and flowers.

It is found in the nucleus. Transcription factor involved in the regulation of gene (e.g. drought-regulated and flavonoid biosynthetic genes) expression and stomatal movements leading to negative regulation of responses to drought and responses to other physiological stimuli (e.g. light). Promotes guard cell deflation in response to water deficit. Triggers root growth upon osmotic stress (e.g. mannitol containing medium). The sequence is that of Transcription factor MYB60 from Arabidopsis thaliana (Mouse-ear cress).